A 332-amino-acid polypeptide reads, in one-letter code: NADH-quinone oxidoreductase subunit H (332 aa).

Helical transmembrane passes span 4-24, 44-64, 78-98, 120-140, 165-185, 194-214, 255-275, 279-299, and 312-332; these read FAFFALETLIKCIIIIAIFAS, IGPDMVGPFGLIQLVADMIKL, FIFAIAPLISAICAFVSLAAI, VALLFVIGTSGLCFYAVFLGG, VGALALIAIIMLVGSFSLVDI, FSWLIFKQPLAFVLFIIALFI, IAGAILVTLLFLGGFNSFWII, IMMIVKSSFIFFWYFWARAAF, and YLILIPLAVLNLLITALTVLL.

The protein belongs to the complex I subunit 1 family. NDH-1 is composed of 14 different subunits. Subunits NuoA, H, J, K, L, M, N constitute the membrane sector of the complex.

It is found in the cell inner membrane. It carries out the reaction a quinone + NADH + 5 H(+)(in) = a quinol + NAD(+) + 4 H(+)(out). In terms of biological role, NDH-1 shuttles electrons from NADH, via FMN and iron-sulfur (Fe-S) centers, to quinones in the respiratory chain. The immediate electron acceptor for the enzyme in this species is believed to be ubiquinone. Couples the redox reaction to proton translocation (for every two electrons transferred, four hydrogen ions are translocated across the cytoplasmic membrane), and thus conserves the redox energy in a proton gradient. This subunit may bind ubiquinone. The polypeptide is NADH-quinone oxidoreductase subunit H (Campylobacter jejuni subsp. jejuni serotype O:23/36 (strain 81-176)).